We begin with the raw amino-acid sequence, 161 residues long: Nucleotide-binding protein BamMC406_2474 (161 aa).

The protein belongs to the YajQ family.

Its function is as follows. Nucleotide-binding protein. This chain is Nucleotide-binding protein BamMC406_2474, found in Burkholderia ambifaria (strain MC40-6).